The sequence spans 126 residues: Protein ApaG (126 aa).

The ApaG domain maps to 2-126; the sequence is SDPRYQIDVS…FRLAVPGALH (125 aa).

The chain is Protein ApaG from Pseudomonas putida (strain W619).